The following is a 115-amino-acid chain: Promotilin (115 aa).

The first 25 residues, 1-25 (MVSRKAVAALLVVHVAAMLASQTEA), serve as a signal peptide directing secretion. The disordered stretch occupies residues 39–72 (QEKERNKGQKKSLSVWQRSGEEGPVDPAEPIREE).

Belongs to the motilin family.

It is found in the secreted. Plays an important role in the regulation of interdigestive gastrointestinal motility and indirectly causes rhythmic contraction of duodenal and colonic smooth muscle. In Homo sapiens (Human), this protein is Promotilin (MLN).